A 364-amino-acid chain; its full sequence is Dihydroorotate dehydrogenase (quinone) (364 aa).

FMN is bound by residues 61-65 (AGYDK) and Thr85. Lys65 is a substrate binding site. 110–114 (NRLGF) provides a ligand contact to substrate. Residues Asn139 and Asn170 each contribute to the FMN site. Residue Asn170 participates in substrate binding. The active-site Nucleophile is Ser173. Substrate is bound at residue Asn175. The FMN site is built by Lys215 and Ser243. 244–245 (NT) provides a ligand contact to substrate. Residues Gly266, Gly295, and 316 to 317 (YT) each bind FMN.

It belongs to the dihydroorotate dehydrogenase family. Type 2 subfamily. In terms of assembly, monomer. It depends on FMN as a cofactor.

Its subcellular location is the cell membrane. The catalysed reaction is (S)-dihydroorotate + a quinone = orotate + a quinol. It functions in the pathway pyrimidine metabolism; UMP biosynthesis via de novo pathway; orotate from (S)-dihydroorotate (quinone route): step 1/1. Functionally, catalyzes the conversion of dihydroorotate to orotate with quinone as electron acceptor. The chain is Dihydroorotate dehydrogenase (quinone) from Brucella abortus (strain S19).